The primary structure comprises 193 residues: Guanylate kinase (193 aa).

A Guanylate kinase-like domain is found at 8-188 (GRLVVLVGPS…ACEQLVSLFV (181 aa)). Residue 15-22 (GPSAVGKS) coordinates ATP.

This sequence belongs to the guanylate kinase family.

The protein localises to the cytoplasm. The enzyme catalyses GMP + ATP = GDP + ADP. Functionally, essential for recycling GMP and indirectly, cGMP. The chain is Guanylate kinase from Nocardia farcinica (strain IFM 10152).